The primary structure comprises 118 residues: MSIKYSNKINKIRTFALSLVFIGLFIAYLGVFFRENIIIMTTFMMVGFLAVIASTVVYFWIGMLSTKTVQIICPSCDKPTKMLGRVDACMHCNQPLTMDRNLEGKEFDEKYNKKSYKS.

2 helical membrane passes run 12–32 (IRTFALSLVFIGLFIAYLGVF) and 43–63 (FMMVGFLAVIASTVVYFWIGM).

It belongs to the UPF0295 family.

The protein localises to the cell membrane. This is UPF0295 protein BT9727_0449 from Bacillus thuringiensis subsp. konkukian (strain 97-27).